The sequence spans 1082 residues: Importin-4 (1082 aa).

N-acetylmethionine is present on Met1. Residues 24–90 (ATEQLQTILR…KSLVLTALQK (67 aa)) form the Importin N-terminal domain. 6 HEAT repeats span residues 348–385 (KLCPHVMPMLEEALRSEDPYQRKAGFLVLAVLSDGAGD), 390–427 (RLLYPLLQIVCKGLDDPSQIVRNAALFALGQFSENLQP), 431–471 (SYSE…NLGP), 475–513 (PYLPELMECMLQPLKNPSKARTKELAVSAIGAIATAAQD), 896–933 (QFVSRLFPVLLNNAREADPEVRSNAIFGLGVLAEHGGC), and 937–975 (DHFPKLLGLLLPLLARERHDRVRDNICGALARVLMASPV).

It belongs to the importin beta family. As to quaternary structure, found in a cytosolic complex with ASF1 (ASF1A or ASF1B) and histones H3 and H4.

Its subcellular location is the cytoplasm. It localises to the nucleus. Nuclear transport receptor that mediates nuclear import of proteins, such as histones, RPS3A, TNP2 and VDR. Serves as receptor for nuclear localization signals (NLS) in cargo substrates. Is thought to mediate docking of the importin/substrate complex to the nuclear pore complex (NPC) through binding to nucleoporin and the complex is subsequently translocated through the pore by an energy requiring, Ran-dependent mechanism. At the nucleoplasmic side of the NPC, Ran binds to the importin, the importin/substrate complex dissociates and importin is re-exported from the nucleus to the cytoplasm where GTP hydrolysis releases Ran. The directionality of nuclear import is thought to be conferred by an asymmetric distribution of the GTP- and GDP-bound forms of Ran between the cytoplasm and nucleus. Mediates the nuclear import of the histone H3-H4 dimer when in complex with ASF1 (ASF1A or ASF1B). Mediates the ligand-independent nuclear import of vitamin D receptor (VDR). This Mus musculus (Mouse) protein is Importin-4 (Ipo4).